The primary structure comprises 412 residues: Peptidase T (412 aa).

A Zn(2+)-binding site is contributed by His84. Residue Asp86 is part of the active site. Asp146 contacts Zn(2+). Glu179 functions as the Proton acceptor in the catalytic mechanism. Zn(2+) contacts are provided by Glu180, Asp202, and His385.

It belongs to the peptidase M20B family. The cofactor is Zn(2+).

It is found in the cytoplasm. The catalysed reaction is Release of the N-terminal residue from a tripeptide.. Cleaves the N-terminal amino acid of tripeptides. The sequence is that of Peptidase T from Haemophilus influenzae (strain PittGG).